Consider the following 617-residue polypeptide: Protein fem-1 homolog C (617 aa).

An N-acetylmethionine modification is found at methionine 1. ANK repeat units lie at residues 2–31, 40–70, 82–111, 115–144, 148–177, 181–210, and 213–242; these read DLKTAVFNAARDGKLRLLTKLLASKSKAEV, NGATPLLMAARYGHLDMVEFLLEQCSASIEV, EGAPPLWAASAAGHLKVVQSLLNHGASVNN, TNSTPLRAACFDGHLEIVKYLVEHKADLEV, HGHTCLMISCYKGHKEIAQYLLEKGADVNR, KGNTALHDCAESGSLDIMKMLLMYCAKMEK, and YGMTPLLSASVTGHTNIVDFLTHHAQTSKT. TPR repeat units follow at residues 245–279 and 338–371; these read INALELLGATFVDKKRDLLGALKYWKKAMNMRYSD and SYYIRYRGAVYADSGNFKRCINLWKYALDMQQSN. ANK repeat units lie at residues 481-523 and 527-556; these read NNFS…DVNV and DDNSPLHIAALNNHPDIMNLLIKSGAHFDA.

It belongs to the fem-1 family. In terms of assembly, component of a Cul2-RING (CRL2) E3 ubiquitin-protein ligase complex, also named ECS (Elongin BC-CUL2/5-SOCS-box protein) complex, composed of CUL2, Elongin BC (ELOB and ELOC), RBX1 and substrate-specific adapter FEM1C. Widely expressed. Expressed at higher level in testis.

The protein operates within protein modification; protein ubiquitination. Its function is as follows. Substrate-recognition component of a Cul2-RING (CRL2) E3 ubiquitin-protein ligase complex of the DesCEND (destruction via C-end degrons) pathway, which recognizes a C-degron located at the extreme C terminus of target proteins, leading to their ubiquitination and degradation. The C-degron recognized by the DesCEND pathway is usually a motif of less than ten residues and can be present in full-length proteins, truncated proteins or proteolytically cleaved forms. The CRL2(FEM1C) complex specifically recognizes proteins with an arginine at the C-terminus: recognizes and binds proteins ending with -Lys/Arg-Xaa-Arg and -Lys/Arg-Xaa-Xaa-Arg C-degrons, such as SIL1 or OR51B2, leading to their ubiquitination and degradation. The CRL2(FEM1C) complex mediates ubiquitination and degradation of truncated MSRB1/SEPX1 selenoproteins produced by failed UGA/Sec decoding. Promotes ubiquitination and degradation of SLBP. This chain is Protein fem-1 homolog C, found in Mus musculus (Mouse).